The primary structure comprises 221 residues: Phosphoglycolate phosphatase (221 aa).

D7 (nucleophile) is an active-site residue. The Mg(2+) site is built by D7 and D9. K148 is a binding site for substrate. Mg(2+) is bound by residues D171 and D175.

It belongs to the archaeal SPP-like hydrolase family. It depends on Mg(2+) as a cofactor.

It catalyses the reaction 2-phosphoglycolate + H2O = glycolate + phosphate. Catalyzes the dephosphorylation of 2-phosphoglycolate. The chain is Phosphoglycolate phosphatase from Methanothermobacter thermautotrophicus (strain ATCC 29096 / DSM 1053 / JCM 10044 / NBRC 100330 / Delta H) (Methanobacterium thermoautotrophicum).